Consider the following 228-residue polypeptide: 7-cyano-7-deazaguanine synthase (228 aa).

Position 9 to 19 (9 to 19 (LSGGPDSTTVL)) interacts with ATP. Residues C193, C203, C206, and C209 each coordinate Zn(2+).

The protein belongs to the QueC family. Zn(2+) serves as cofactor.

The enzyme catalyses 7-carboxy-7-deazaguanine + NH4(+) + ATP = 7-cyano-7-deazaguanine + ADP + phosphate + H2O + H(+). It functions in the pathway purine metabolism; 7-cyano-7-deazaguanine biosynthesis. Functionally, catalyzes the ATP-dependent conversion of 7-carboxy-7-deazaguanine (CDG) to 7-cyano-7-deazaguanine (preQ(0)). This chain is 7-cyano-7-deazaguanine synthase, found in Rickettsia rickettsii (strain Iowa).